The chain runs to 1286 residues: Lysine-specific demethylase JMJ705 (1286 aa).

In terms of domain architecture, JmjN spans 25 to 66 (APEFRPTAAEFADPVSYILKIEPAAAPYGICKVVPPLPPPPK). The disordered stretch occupies residues 82 to 105 (PDDRSPSFPTRHQQVGLCPRRTRP). A JmjC domain is found at 201–367 (ETAWNMRGVA…IAKEAAIRRA (167 aa)). 3 residues coordinate Fe cation: His-244, Glu-246, and His-335. Positions 641–679 (PNSSNNVGCVGTKLSSSSTERQERPSSQNAHCNGSSVIS) are enriched in polar residues. Disordered stretches follow at residues 641–686 (PNSS…KGVR), 1013–1060 (AEPV…HSQE), and 1077–1164 (PAGT…PKQA). Residues 1119–1136 (HASGQKSNVQEANANSAS) show a composition bias toward polar residues. The C2H2-type 1; degenerate zinc finger occupies 1167-1189 (YSCDIEGCSMSFRTKRDLSLHKS). 3 consecutive C2H2-type zinc fingers follow at residues 1190–1214 (DICPVKGCGKKFFSHKYLLQHRKVH), 1220–1244 (LTCPWKGCNMAFKWPWARTEHLRVH), and 1250–1276 (YVCHEPGCAQTFRFVSDFSRHKRKTGH).

It depends on Fe(2+) as a cofactor. As to expression, expressed in leaves and flag leaves. Expressed at low levels in roots, shoots, stems and panicles.

It localises to the nucleus. The enzyme catalyses N(6),N(6),N(6)-trimethyl-L-lysyl(27)-[histone H3] + 2 2-oxoglutarate + 2 O2 = N(6)-methyl-L-lysyl(27)-[histone H3] + 2 formaldehyde + 2 succinate + 2 CO2. Functionally, histone demethylase that demethylates 'Lys-27' (H3K27me) of histone H3 with a specific activity for H3K27me3 and H3K27me2. No activity on H3K4me3, H3K9me3, H3K27me1 and H3K36me3. Involved in biotic stress response. May demethylate H3K27me3-marked defense-related genes and increase their basal and induced expression levels during pathogen infection. In Oryza sativa subsp. japonica (Rice), this protein is Lysine-specific demethylase JMJ705 (JMJ705).